Reading from the N-terminus, the 744-residue chain is NAD(P)H-quinone oxidoreductase subunit 5, chloroplastic (744 aa).

16 helical membrane passes run 9 to 29 (WIMP…LLLF), 41 to 61 (AFPT…FFIL), 89 to 109 (VDPL…TVLI), 125 to 145 (FSYM…SNLI), 147 to 167 (IYIC…FWFT), 185 to 205 (GDFS…SFEF), 219 to 239 (NEIP…GALA), 258 to 278 (TPIS…FLVA), 280 to 300 (LLPL…IGII), 327 to 347 (LGYM…FHLI), 354 to 374 (ALLF…VGYS), 396 to 416 (TSFL…CFWS), 425 to 445 (WLYS…TAFY), 546 to 566 (LFPM…GIPF), 600 to 620 (FIPN…IASV), and 722 to 742 (LLLY…LYLF).

The protein belongs to the complex I subunit 5 family. In terms of assembly, NDH is composed of at least 16 different subunits, 5 of which are encoded in the nucleus.

The protein resides in the plastid. It localises to the chloroplast thylakoid membrane. It carries out the reaction a plastoquinone + NADH + (n+1) H(+)(in) = a plastoquinol + NAD(+) + n H(+)(out). The catalysed reaction is a plastoquinone + NADPH + (n+1) H(+)(in) = a plastoquinol + NADP(+) + n H(+)(out). Its function is as follows. NDH shuttles electrons from NAD(P)H:plastoquinone, via FMN and iron-sulfur (Fe-S) centers, to quinones in the photosynthetic chain and possibly in a chloroplast respiratory chain. The immediate electron acceptor for the enzyme in this species is believed to be plastoquinone. Couples the redox reaction to proton translocation, and thus conserves the redox energy in a proton gradient. The protein is NAD(P)H-quinone oxidoreductase subunit 5, chloroplastic (ndhF) of Pelargonium hortorum (Common geranium).